The following is a 281-amino-acid chain: Transcription factor bHLH79 (281 aa).

The disordered stretch occupies residues 47–167 (FTRSEHSGNK…GQATDRHSLA (121 aa)). 2 stretches are compositionally biased toward basic and acidic residues: residues 77-88 (KTRDLNSEDDSS) and 138-152 (TEQK…DYIH). The region spanning 159–209 (QATDRHSLAERARREKISEKMTALQDIIPGCNKIIGKALVLDEIINYIQSL) is the bHLH domain.

As to quaternary structure, homodimer.

Its subcellular location is the nucleus. This chain is Transcription factor bHLH79 (BHLH79), found in Arabidopsis thaliana (Mouse-ear cress).